The sequence spans 152 residues: Ribosome maturation factor RimP (152 aa).

Belongs to the RimP family.

It is found in the cytoplasm. Functionally, required for maturation of 30S ribosomal subunits. This chain is Ribosome maturation factor RimP, found in Aeromonas salmonicida (strain A449).